A 384-amino-acid polypeptide reads, in one-letter code: F-box protein At2g07140 (384 aa).

The F-box domain maps to 1-46 (MTLPELPKDLVEEILSFVPATSLKRLRSTCKGWNRLFKDDKRFTRI).

This chain is F-box protein At2g07140, found in Arabidopsis thaliana (Mouse-ear cress).